The chain runs to 66 residues: Stress-associated endoplasmic reticulum protein 1 (66 aa).

A disordered region spans residues 1–33 (MVAKQRIRMANEKHSKNITQRGNVAKTSRNAPG). Residues 1 to 38 (MVAKQRIRMANEKHSKNITQRGNVAKTSRNAPGEKASV) lie on the Cytoplasmic side of the membrane. Positions 17–30 (NITQRGNVAKTSRN) are enriched in polar residues. A helical membrane pass occupies residues 39–59 (GPWLLALFIFVVCGSAIFQII). At 60–66 (QSIRMGM) the chain is on the extracellular side.

The protein belongs to the RAMP4 family. As to quaternary structure, interacts with SEC61B, SEC61A1 and the SEC61 complex. Interacts with CANX.

It localises to the membrane. The protein resides in the endoplasmic reticulum membrane. In terms of biological role, interacts with target proteins during their translocation into the lumen of the endoplasmic reticulum. Protects unfolded target proteins against degradation during ER stress. May facilitate glycosylation of target proteins after termination of ER stress. May modulate the use of N-glycosylation sites on target proteins. This Pongo abelii (Sumatran orangutan) protein is Stress-associated endoplasmic reticulum protein 1 (SERP1).